Here is a 412-residue protein sequence, read N- to C-terminus: MTDREEVVELRGHIIDSLIFSRVLDTIMEMGGDFEILEFKVGKRKTDPSFAKILVKGKDPEHLREIVSELRKYGAVPVHTQEVRLEPAPADGVCPRGFYTTTNHRTFVLFDGEWIEVEDIEMDCAIVVYPEERRAVAKPIREVREGELVVVGDRGVRVKPPERPRGRTGIFGFMESEVSPEKPTPTLIRRIAEELEWHRKNGKIVVVVGPAVIHAGARDDLAWMIREGYVDVLFAGNAVATHDVEASLFGTSLGVDLETGEPVKGGHSHHLYAINEIRRVGGLREAVEKGILKDGIMYECIVNDVPYVLAGSIRDDGPIPDVITDVMEAQAEMRRHLKGATLVLMMATMLHSIATGNLLPSWVKTICVDINPAVVTKLMDRGTAQALGIVSDVGVFLPELVKELKRVRDDEA.

The NAD(+) site is built by Asn237, Ala238, Asp316, Thr348, Met349, Leu350, His351, Asp369, Asp392, and Val393.

This sequence belongs to the AgrE/ArgZ ornithine cyclodeaminase family. NAD(+) serves as cofactor.

The enzyme catalyses L-ornithine = L-proline + NH4(+). Catalyzes the conversion of ornithine to proline, with the release of ammonia. The sequence is that of Ornithine cyclodeaminase from Methanopyrus kandleri (strain AV19 / DSM 6324 / JCM 9639 / NBRC 100938).